The chain runs to 553 residues: Hydroxylamine reductase (553 aa).

Residues cysteine 3, cysteine 6, cysteine 18, and cysteine 25 each contribute to the [2Fe-2S] cluster site. Positions 249, 273, 317, 405, 433, 459, 493, and 495 each coordinate hybrid [4Fe-2O-2S] cluster. A Cysteine persulfide modification is found at cysteine 405.

The protein belongs to the HCP family. [2Fe-2S] cluster serves as cofactor. It depends on hybrid [4Fe-2O-2S] cluster as a cofactor.

The protein localises to the cytoplasm. The enzyme catalyses A + NH4(+) + H2O = hydroxylamine + AH2 + H(+). Catalyzes the reduction of hydroxylamine to form NH(3) and H(2)O. This chain is Hydroxylamine reductase, found in Mannheimia succiniciproducens (strain KCTC 0769BP / MBEL55E).